Reading from the N-terminus, the 729-residue chain is uncharacterized protein (729 aa).

This is an uncharacterized protein from Caenorhabditis elegans.